Consider the following 430-residue polypeptide: Enolase (430 aa).

Gln-163 lines the (2R)-2-phosphoglycerate pocket. The Proton donor role is filled by Glu-205. 3 residues coordinate Mg(2+): Asp-242, Glu-287, and Asp-314. Positions 339, 368, 369, and 390 each coordinate (2R)-2-phosphoglycerate. Lys-339 acts as the Proton acceptor in catalysis.

Belongs to the enolase family. Requires Mg(2+) as cofactor.

The protein localises to the cytoplasm. It localises to the secreted. The protein resides in the cell surface. The enzyme catalyses (2R)-2-phosphoglycerate = phosphoenolpyruvate + H2O. It functions in the pathway carbohydrate degradation; glycolysis; pyruvate from D-glyceraldehyde 3-phosphate: step 4/5. In terms of biological role, catalyzes the reversible conversion of 2-phosphoglycerate (2-PG) into phosphoenolpyruvate (PEP). It is essential for the degradation of carbohydrates via glycolysis. In Exiguobacterium sp. (strain ATCC BAA-1283 / AT1b), this protein is Enolase.